The chain runs to 87 residues: U3-theraphotoxin-Hhn1c (87 aa).

The first 24 residues, 1-24 (MVNMKASMFLTFAGLVLLFVVCHA), serve as a signal peptide directing secretion. A propeptide spanning residues 25 to 52 (SESEEKEFPKEMLSSIFAVDDDFKQEER) is cleaved from the precursor. Cystine bridges form between cysteine 54–cysteine 67, cysteine 61–cysteine 72, and cysteine 66–cysteine 79.

This sequence belongs to the neurotoxin 10 (Hwtx-1) family. 51 (Hntx-8) subfamily. Hntx-8 sub-subfamily. As to expression, expressed by the venom gland.

The protein resides in the secreted. Functionally, ion channel inhibitor. This chain is U3-theraphotoxin-Hhn1c, found in Cyriopagopus hainanus (Chinese bird spider).